We begin with the raw amino-acid sequence, 176 residues long: 4-hydroxylaminobenzoate lyase (176 aa).

Belongs to the PnbB family.

The enzyme catalyses 4-hydroxylaminobenzoate + H2O + H(+) = 3,4-dihydroxybenzoate + NH4(+). Its function is as follows. Lyase involved in the degradation of nitroaromatic compounds. Catalyzes the conversion of 4-hydroxylaminobenzoate to 3,4-dihydroxybenzoate (protocatechuate). Required for the catabolism of 4-nitrotoluene. The sequence is that of 4-hydroxylaminobenzoate lyase from Pseudomonas putida (Arthrobacter siderocapsulatus).